A 310-amino-acid chain; its full sequence is p-hydroxybenzoic acid efflux pump subunit AaeA (310 aa).

Residues Ala-12–Tyr-32 form a helical membrane-spanning segment.

This sequence belongs to the membrane fusion protein (MFP) (TC 8.A.1) family.

It is found in the cell inner membrane. Forms an efflux pump with AaeB. This Salmonella schwarzengrund (strain CVM19633) protein is p-hydroxybenzoic acid efflux pump subunit AaeA.